A 1092-amino-acid chain; its full sequence is Elongation factor 3 (1092 aa).

ADP is bound at residue Val92. 7 HEAT repeats span residues Met95–Ser133, Pro138–Pro175, Ala177–Arg214, Thr218–Asn255, Asp257–Pro293, Pro294–Lys331, and Gln333–Thr370. ADP is bound at residue Glu454. ABC transporter domains lie at Glu486–Leu704 and Leu730–Lys1044. 4 residues coordinate ADP: Asn766, Glu973, Asn976, and His1002. Disordered stretches follow at residues Thr1023–Lys1044 and Ser1063–Glu1092. Residues Ser1063–Lys1075 are compositionally biased toward basic residues. Positions Glu1076 to Glu1086 are enriched in basic and acidic residues.

The protein belongs to the ABC transporter superfamily. ABCF family. EF3 subfamily.

The protein localises to the cytoplasm. Its subcellular location is the cytosol. The catalysed reaction is ATP + H2O = ADP + phosphate + H(+). It participates in protein biosynthesis; polypeptide chain elongation. Its function is as follows. Ribosome-dependent ATPase that functions in cytoplasmic translation elongation. Required for the ATP-dependent release of deacylated tRNA from the ribosomal E-site during protein biosynthesis. Stimulates the eEF1A-dependent binding of aminoacyl-tRNA to the ribosomal A-site, which has reduced affinity for tRNA as long as the E-site is occupied. Assists translation termination by stimulating the release of nascent protein from the ribosome by release factors. This chain is Elongation factor 3, found in Gonapodya prolifera (strain JEL478) (Monoblepharis prolifera).